Reading from the N-terminus, the 87-residue chain is CRISPR-associated endoribonuclease Cas2 (87 aa).

D8 is a binding site for Mg(2+).

This sequence belongs to the CRISPR-associated endoribonuclease Cas2 protein family. Homodimer, forms a heterotetramer with a Cas1 homodimer. Mg(2+) is required as a cofactor.

In terms of biological role, CRISPR (clustered regularly interspaced short palindromic repeat), is an adaptive immune system that provides protection against mobile genetic elements (viruses, transposable elements and conjugative plasmids). CRISPR clusters contain sequences complementary to antecedent mobile elements and target invading nucleic acids. CRISPR clusters are transcribed and processed into CRISPR RNA (crRNA). Functions as a ssRNA-specific endoribonuclease. Involved in the integration of spacer DNA into the CRISPR cassette. This chain is CRISPR-associated endoribonuclease Cas2, found in Methanosarcina acetivorans (strain ATCC 35395 / DSM 2834 / JCM 12185 / C2A).